The primary structure comprises 557 residues: Arginine--tRNA ligase (557 aa).

A 'HIGH' region motif is present at residues 132–142 (ANPTGLLHMGN).

The protein belongs to the class-I aminoacyl-tRNA synthetase family. As to quaternary structure, monomer.

Its subcellular location is the cytoplasm. The enzyme catalyses tRNA(Arg) + L-arginine + ATP = L-arginyl-tRNA(Arg) + AMP + diphosphate. This is Arginine--tRNA ligase from Carboxydothermus hydrogenoformans (strain ATCC BAA-161 / DSM 6008 / Z-2901).